The sequence spans 120 residues: Protein RALF-like 1 (120 aa).

Positions 1–26 (MDKSFTLFLTLTILVVFIISSPPVQA) are cleaved as a signal peptide. The propeptide at 27 to 71 (GFANDLGGVAWATTGDNGSGCHGSIAECIGAEEEEMDSEINRRIL) is removed in mature form. Asparagine 43 carries an N-linked (GlcNAc...) asparagine glycan. Cystine bridges form between cysteine 89-cysteine 99 and cysteine 112-cysteine 118.

Belongs to the plant rapid alkalinization factor (RALF) family. In terms of assembly, interacts with FER and promotes its phosphorylation and subsequent activation. Proteolytically cleaved, probably by S1P, a subtilisin-like serine protease (subtilase). In terms of tissue distribution, expressed in roots and stems.

The protein resides in the secreted. Cell signaling peptide that may regulate plant stress, growth, and development. Mediates a rapid alkalinization of extracellular space by mediating a transient increase in the cytoplasmic Ca(2+) concentration leading to a calcium-dependent signaling events through a cell surface receptor and a concomitant activation of some intracellular mitogen-activated protein kinases. Mostly active in roots. Prevents plant growth (e.g. root and leaf length). Suppresses cell elongation of the primary root by activating the cell surface receptor FER and triggering phosphorylation of AHA2 and subsequent extracellular alkalinization. The chain is Protein RALF-like 1 (RALF1) from Arabidopsis thaliana (Mouse-ear cress).